A 398-amino-acid chain; its full sequence is RNA exonuclease 3 (398 aa).

Residues 239–385 form the Exonuclease domain; sequence VLALDCEMGF…QDAIAAMDII (147 aa).

It belongs to the REXO1/REXO3 family.

It localises to the cytoplasm. The protein localises to the nucleus. Its function is as follows. 3' to 5' exoribonuclease required for proper 3' end maturation of MRP RNA and of the U5L snRNA. The polypeptide is RNA exonuclease 3 (REX3) (Candida glabrata (strain ATCC 2001 / BCRC 20586 / JCM 3761 / NBRC 0622 / NRRL Y-65 / CBS 138) (Yeast)).